We begin with the raw amino-acid sequence, 132 residues long: D-ribose pyranase (132 aa).

H20 (proton donor) is an active-site residue. Residues D28, H99, and 121-123 (YSN) contribute to the substrate site.

This sequence belongs to the RbsD / FucU family. RbsD subfamily. As to quaternary structure, homodecamer.

The protein resides in the cytoplasm. It carries out the reaction beta-D-ribopyranose = beta-D-ribofuranose. It participates in carbohydrate metabolism; D-ribose degradation; D-ribose 5-phosphate from beta-D-ribopyranose: step 1/2. Catalyzes the interconversion of beta-pyran and beta-furan forms of D-ribose. The polypeptide is D-ribose pyranase (Pseudomonas putida (strain W619)).